Here is a 274-residue protein sequence, read N- to C-terminus: Exosome complex component Rrp42 (274 aa).

The protein belongs to the RNase PH family. Rrp42 subfamily. In terms of assembly, component of the archaeal exosome complex. Forms a hexameric ring-like arrangement composed of 3 Rrp41-Rrp42 heterodimers. The hexameric ring associates with a trimer of Rrp4 and/or Csl4 subunits.

It localises to the cytoplasm. Its function is as follows. Non-catalytic component of the exosome, which is a complex involved in RNA degradation. Contributes to the structuring of the Rrp41 active site. The chain is Exosome complex component Rrp42 from Pyrobaculum aerophilum (strain ATCC 51768 / DSM 7523 / JCM 9630 / CIP 104966 / NBRC 100827 / IM2).